Reading from the N-terminus, the 156-residue chain is Small ribosomal subunit protein uS7 (156 aa).

Belongs to the universal ribosomal protein uS7 family. As to quaternary structure, part of the 30S ribosomal subunit. Contacts proteins S9 and S11.

In terms of biological role, one of the primary rRNA binding proteins, it binds directly to 16S rRNA where it nucleates assembly of the head domain of the 30S subunit. Is located at the subunit interface close to the decoding center, probably blocks exit of the E-site tRNA. In Staphylococcus aureus (strain bovine RF122 / ET3-1), this protein is Small ribosomal subunit protein uS7.